We begin with the raw amino-acid sequence, 249 residues long: 5-amino-6-(5-phospho-D-ribitylamino)uracil phosphatase YcsE (249 aa).

D16 acts as the Nucleophile in catalysis. Mg(2+) is bound at residue D16. M17 is a phosphate binding site. D18 is a Mg(2+) binding site. Phosphate is bound by residues 50–51 and K177; that span reads TG. Mg(2+) contacts are provided by D200 and S201. N203 lines the phosphate pocket.

This sequence belongs to the HAD-like hydrolase superfamily. Cof family. It depends on Mg(2+) as a cofactor.

The catalysed reaction is 5-amino-6-(5-phospho-D-ribitylamino)uracil + H2O = 5-amino-6-(D-ribitylamino)uracil + phosphate. It participates in cofactor biosynthesis; riboflavin biosynthesis; 5-amino-6-(D-ribitylamino)uracil from GTP: step 4/4. Functionally, catalyzes the dephosphorylation of the riboflavin precursor 5-amino-6-(5-phospho-D-ribitylamino)uracil and of flavin mononucleotide (FMN) in vitro. To a lesser extent, may also catalyze the dephosphorylation of a broad range of substrates such as phosphorylated sugars and triphosphate nucleotides in vitro. The sequence is that of 5-amino-6-(5-phospho-D-ribitylamino)uracil phosphatase YcsE (ycsE) from Bacillus subtilis (strain 168).